The primary structure comprises 436 residues: Histidinol dehydrogenase (436 aa).

Thr240, Gln262, and His265 together coordinate substrate. Residues Gln262 and His265 each contribute to the Zn(2+) site. Active-site proton acceptor residues include Glu331 and His332. 4 residues coordinate substrate: His332, Asp365, Glu419, and His424. A Zn(2+)-binding site is contributed by Asp365. Residue His424 coordinates Zn(2+).

It belongs to the histidinol dehydrogenase family. Zn(2+) serves as cofactor.

It catalyses the reaction L-histidinol + 2 NAD(+) + H2O = L-histidine + 2 NADH + 3 H(+). Its pathway is amino-acid biosynthesis; L-histidine biosynthesis; L-histidine from 5-phospho-alpha-D-ribose 1-diphosphate: step 9/9. Catalyzes the sequential NAD-dependent oxidations of L-histidinol to L-histidinaldehyde and then to L-histidine. In Leifsonia xyli subsp. xyli (strain CTCB07), this protein is Histidinol dehydrogenase.